The sequence spans 263 residues: MLHITPLAAFNDNYIWVFQSQQNTGAESSGIYVVDPGDGQVVIDYLIQTGQALLGILITHHHHDHTGGIEQLIRRFGAQIAVYGPQSENIIGVNHPIVANGDISLTNAGLNAKVIQLPGHTLGHIAYLIEDVLFCGDTLFSAGCGRIFEGSAEQMYQSLSELGQLPDNTKVCCAHEYTIANLAFANRVEPNNAALIDYTKKAQALRAQNLPTLPSSIGQEKAINPFLRSDSEEICQSLSIQFQQPINNPLQSFSLLRQWKDNF.

Residues H60, H62, D64, H65, H120, D137, and H175 each contribute to the Zn(2+) site.

Belongs to the metallo-beta-lactamase superfamily. Glyoxalase II family. As to quaternary structure, monomer. Zn(2+) is required as a cofactor.

It catalyses the reaction an S-(2-hydroxyacyl)glutathione + H2O = a 2-hydroxy carboxylate + glutathione + H(+). The protein operates within secondary metabolite metabolism; methylglyoxal degradation; (R)-lactate from methylglyoxal: step 2/2. Thiolesterase that catalyzes the hydrolysis of S-D-lactoyl-glutathione to form glutathione and D-lactic acid. This is Hydroxyacylglutathione hydrolase from Shewanella pealeana (strain ATCC 700345 / ANG-SQ1).